Reading from the N-terminus, the 141-residue chain is Nucleoside diphosphate kinase (141 aa).

ATP is bound by residues K11, F59, R87, T93, R104, and N114. The Pros-phosphohistidine intermediate role is filled by H117.

The protein belongs to the NDK family. As to quaternary structure, homotetramer. The cofactor is Mg(2+).

It localises to the cytoplasm. It catalyses the reaction a 2'-deoxyribonucleoside 5'-diphosphate + ATP = a 2'-deoxyribonucleoside 5'-triphosphate + ADP. The catalysed reaction is a ribonucleoside 5'-diphosphate + ATP = a ribonucleoside 5'-triphosphate + ADP. In terms of biological role, major role in the synthesis of nucleoside triphosphates other than ATP. The ATP gamma phosphate is transferred to the NDP beta phosphate via a ping-pong mechanism, using a phosphorylated active-site intermediate. This is Nucleoside diphosphate kinase from Neisseria meningitidis serogroup A / serotype 4A (strain DSM 15465 / Z2491).